The primary structure comprises 525 residues: Vanin-like protein 2 (525 aa).

Residues 1-27 form the signal peptide; the sequence is MAKNYWGFFLFCLALGLMLNLSQQASL. Asn-20 and Asn-61 each carry an N-linked (GlcNAc...) asparagine glycan. One can recognise a CN hydrolase domain in the interval 33–303; that stretch reads YTAGVVEFEP…RSIYVARVPK (271 aa). Catalysis depends on Glu-72, which acts as the Proton acceptor. Residues Asn-99, Asn-116, and Asn-124 are each glycosylated (N-linked (GlcNAc...) asparagine). Catalysis depends on Lys-167, which acts as the Proton donor. Asn-176 carries an N-linked (GlcNAc...) asparagine glycan. The Nucleophile role is filled by Cys-199. N-linked (GlcNAc...) asparagine glycans are attached at residues Asn-333, Asn-348, and Asn-375.

Belongs to the carbon-nitrogen hydrolase superfamily. BTD/VNN family. As to expression, expressed in third instar larvae.

The protein resides in the secreted. In Drosophila melanogaster (Fruit fly), this protein is Vanin-like protein 2.